Here is a 200-residue protein sequence, read N- to C-terminus: Pyridoxamine 5'-phosphate oxidase homolog (200 aa).

Residues Phe60, Lys68, and Asn125 each coordinate FMN.

Belongs to the pyridoxamine 5'-phosphate oxidase family. FMN is required as a cofactor.

Its subcellular location is the cytoplasm. The protein resides in the nucleus. In Saccharomyces cerevisiae (strain ATCC 204508 / S288c) (Baker's yeast), this protein is Pyridoxamine 5'-phosphate oxidase homolog.